Reading from the N-terminus, the 138-residue chain is Large ribosomal subunit protein uL16 (138 aa).

Positions 1 to 19 (MLIPRRVKHRKQHHPKRSG) are enriched in basic residues. The disordered stretch occupies residues 1–24 (MLIPRRVKHRKQHHPKRSGAAKGG).

This sequence belongs to the universal ribosomal protein uL16 family. In terms of assembly, part of the 50S ribosomal subunit.

In terms of biological role, binds 23S rRNA and is also seen to make contacts with the A and possibly P site tRNAs. The polypeptide is Large ribosomal subunit protein uL16 (Micrococcus luteus (strain ATCC 4698 / DSM 20030 / JCM 1464 / CCM 169 / CCUG 5858 / IAM 1056 / NBRC 3333 / NCIMB 9278 / NCTC 2665 / VKM Ac-2230) (Micrococcus lysodeikticus)).